The sequence spans 758 residues: Glucan endo-1,3-beta-D-glucosidase (758 aa).

The tat-type signal signal peptide spans 1-34 (MSHASRRRWRRATTSAATAALLCGALLTFPSAPA). The tract at residues 38–251 (VRLGSGSYTT…SGYASVALLP (214 aa)) is beta-sandwich subdomain. The region spanning 38 to 704 (VRLGSGSYTT…QWLSTLAEFG (667 aa)) is the GH81 domain. Positions 252–342 (SPDDFDRYAP…EGDRFTTELT (91 aa)) are alpha/beta subdomain. The (alpha/beta)6 barrel subdomain stretch occupies residues 352 to 704 (TVDSADHQRL…QWLSTLAEFG (353 aa)). Y382, K386, D457, H461, N532, E534, and E538 together coordinate (1,3-beta-D-glucosyl)n. The active site involves D457. Residues E534 and E538 contribute to the active site.

Belongs to the glycosyl hydrolase 81 family. In terms of processing, predicted to be exported by the Tat system. The position of the signal peptide cleavage has not been experimentally proven.

Its subcellular location is the secreted. It carries out the reaction Hydrolysis of (1-&gt;3)-beta-D-glucosidic linkages in (1-&gt;3)-beta-D-glucans.. Cleaves internal linkages in 1,3-beta-glucan. May contribute to biomass degradation by hydrolyzing the 1,3-beta-linked plant polymer callose that is present in decomposing plant tissue. This Thermobifida fusca (strain YX) protein is Glucan endo-1,3-beta-D-glucosidase.